The chain runs to 909 residues: Protein translocase subunit SecA (909 aa).

ATP contacts are provided by residues Q85, 103-107 (GEGKT), and D512. The interval 866 to 899 (HETSATGGEEEINKPVVKGKKIGRNDPCPCGSGK) is disordered. Residues C893, C895, C904, and C905 each coordinate Zn(2+).

This sequence belongs to the SecA family. In terms of assembly, monomer and homodimer. Part of the essential Sec protein translocation apparatus which comprises SecA, SecYEG and auxiliary proteins SecDF. Other proteins may also be involved. Zn(2+) serves as cofactor.

It localises to the cell membrane. It is found in the cytoplasm. The enzyme catalyses ATP + H2O + cellular proteinSide 1 = ADP + phosphate + cellular proteinSide 2.. In terms of biological role, part of the Sec protein translocase complex. Interacts with the SecYEG preprotein conducting channel. Has a central role in coupling the hydrolysis of ATP to the transfer of proteins into and across the cell membrane, serving as an ATP-driven molecular motor driving the stepwise translocation of polypeptide chains across the membrane. In Finegoldia magna (strain ATCC 29328 / DSM 20472 / WAL 2508) (Peptostreptococcus magnus), this protein is Protein translocase subunit SecA.